A 632-amino-acid polypeptide reads, in one-letter code: DNA mismatch repair protein MutL (632 aa).

Residues 376–397 are disordered; it reads EQPQAEPRQSFTPGSGAGSGYQ.

The protein belongs to the DNA mismatch repair MutL/HexB family.

Its function is as follows. This protein is involved in the repair of mismatches in DNA. It is required for dam-dependent methyl-directed DNA mismatch repair. May act as a 'molecular matchmaker', a protein that promotes the formation of a stable complex between two or more DNA-binding proteins in an ATP-dependent manner without itself being part of a final effector complex. In Pseudomonas entomophila (strain L48), this protein is DNA mismatch repair protein MutL.